Consider the following 227-residue polypeptide: Cytochrome c oxidase subunit 2 (227 aa).

The Mitochondrial intermembrane portion of the chain corresponds to 1–14; the sequence is MANHSQLGFQDASS. Residues 15-45 traverse the membrane as a helical segment; sequence PIMEELVEFHDHALMVALAICSLVLYLLTLM. Residues 46–58 lie on the Mitochondrial matrix side of the membrane; it reads LTQKLSSNTVDAQ. A helical membrane pass occupies residues 59–86; that stretch reads EVELIWTILPAIVLVLLALPSLQILYMM. The Mitochondrial intermembrane segment spans residues 87–227; sequence DEIEEPDLTL…FETWSSLLSS (141 aa). Residues H160, C195, E197, C199, H203, and M206 each coordinate Cu cation. E197 contributes to the Mg(2+) binding site.

The protein belongs to the cytochrome c oxidase subunit 2 family. As to quaternary structure, component of the cytochrome c oxidase (complex IV, CIV), a multisubunit enzyme composed of 14 subunits. The complex is composed of a catalytic core of 3 subunits MT-CO1, MT-CO2 and MT-CO3, encoded in the mitochondrial DNA, and 11 supernumerary subunits COX4I, COX5A, COX5B, COX6A, COX6B, COX6C, COX7A, COX7B, COX7C, COX8 and NDUFA4, which are encoded in the nuclear genome. The complex exists as a monomer or a dimer and forms supercomplexes (SCs) in the inner mitochondrial membrane with NADH-ubiquinone oxidoreductase (complex I, CI) and ubiquinol-cytochrome c oxidoreductase (cytochrome b-c1 complex, complex III, CIII), resulting in different assemblies (supercomplex SCI(1)III(2)IV(1) and megacomplex MCI(2)III(2)IV(2)). Found in a complex with TMEM177, COA6, COX18, COX20, SCO1 and SCO2. Interacts with TMEM177 in a COX20-dependent manner. Interacts with COX20. Interacts with COX16. Cu cation serves as cofactor.

The protein resides in the mitochondrion inner membrane. The catalysed reaction is 4 Fe(II)-[cytochrome c] + O2 + 8 H(+)(in) = 4 Fe(III)-[cytochrome c] + 2 H2O + 4 H(+)(out). Functionally, component of the cytochrome c oxidase, the last enzyme in the mitochondrial electron transport chain which drives oxidative phosphorylation. The respiratory chain contains 3 multisubunit complexes succinate dehydrogenase (complex II, CII), ubiquinol-cytochrome c oxidoreductase (cytochrome b-c1 complex, complex III, CIII) and cytochrome c oxidase (complex IV, CIV), that cooperate to transfer electrons derived from NADH and succinate to molecular oxygen, creating an electrochemical gradient over the inner membrane that drives transmembrane transport and the ATP synthase. Cytochrome c oxidase is the component of the respiratory chain that catalyzes the reduction of oxygen to water. Electrons originating from reduced cytochrome c in the intermembrane space (IMS) are transferred via the dinuclear copper A center (CU(A)) of subunit 2 and heme A of subunit 1 to the active site in subunit 1, a binuclear center (BNC) formed by heme A3 and copper B (CU(B)). The BNC reduces molecular oxygen to 2 water molecules using 4 electrons from cytochrome c in the IMS and 4 protons from the mitochondrial matrix. The protein is Cytochrome c oxidase subunit 2 (MT-CO2) of Coturnix japonica (Japanese quail).